A 286-amino-acid polypeptide reads, in one-letter code: 4-diphosphocytidyl-2-C-methyl-D-erythritol kinase (286 aa).

The active site involves lysine 11. Proline 94–serine 104 is an ATP binding site. Residue aspartate 136 is part of the active site.

It belongs to the GHMP kinase family. IspE subfamily.

The enzyme catalyses 4-CDP-2-C-methyl-D-erythritol + ATP = 4-CDP-2-C-methyl-D-erythritol 2-phosphate + ADP + H(+). Its pathway is isoprenoid biosynthesis; isopentenyl diphosphate biosynthesis via DXP pathway; isopentenyl diphosphate from 1-deoxy-D-xylulose 5-phosphate: step 3/6. Functionally, catalyzes the phosphorylation of the position 2 hydroxy group of 4-diphosphocytidyl-2C-methyl-D-erythritol. The sequence is that of 4-diphosphocytidyl-2-C-methyl-D-erythritol kinase from Pseudomonas putida (strain ATCC 700007 / DSM 6899 / JCM 31910 / BCRC 17059 / LMG 24140 / F1).